The sequence spans 155 residues: Fibroblast growth factor 1 (155 aa).

Ala2 bears the N-acetylalanine mark. A propeptide spanning residues Ala2 to Lys15 is cleaved from the precursor. Residues Lys24–Lys27 carry the Nuclear localization signal motif. Asn33 lines the heparin pocket. A heparin-binding region spans residues Lys127–Lys143.

It belongs to the heparin-binding growth factors family. In terms of assembly, monomer. Homodimer. Interacts with FGFR1, FGFR2, FGFR3 and FGFR4. Affinity between fibroblast growth factors (FGFs) and their receptors is increased by heparan sulfate glycosaminoglycans that function as coreceptors. Found in a complex with FGFBP1, FGF1 and FGF2. Interacts with FGFBP1. Part of a Cu(2+)-dependent multiprotein aggregate containing FGF1, S100A13 and SYT1. Interacts with SYT1. Interacts with S100A13. Interacts with LRRC59. Interacts with CSNKA, CSNKB and FIBP. While binding with LRRC59, CSNKA and FIBP seem mutually exclusive, CSNKB and FIBP may cooperatively interact with FGF1. Forms a ternary complex with FGFR1 and ITGAV:ITGB3 and induces the recruitment of PTPN11 to the complex. Post-translationally, in the nucleus, phosphorylated by PKC/PRKCD. In terms of tissue distribution, predominantly expressed in kidney and brain. Detected at much lower levels in heart and skeletal muscle.

It is found in the secreted. Its subcellular location is the cytoplasm. The protein resides in the cell cortex. The protein localises to the cytosol. It localises to the nucleus. Functionally, plays an important role in the regulation of cell survival, cell division, angiogenesis, cell differentiation and cell migration. Functions as a potent mitogen in vitro. Acts as a ligand for FGFR1 and integrins. Binds to FGFR1 in the presence of heparin leading to FGFR1 dimerization and activation via sequential autophosphorylation on tyrosine residues which act as docking sites for interacting proteins, leading to the activation of several signaling cascades. Binds to integrin ITGAV:ITGB3. Its binding to integrin, subsequent ternary complex formation with integrin and FGFR1, and the recruitment of PTPN11 to the complex are essential for FGF1 signaling. Induces the phosphorylation and activation of FGFR1, FRS2, MAPK3/ERK1, MAPK1/ERK2 and AKT1. Can induce angiogenesis. This is Fibroblast growth factor 1 (FGF1) from Homo sapiens (Human).